The sequence spans 249 residues: uncharacterized protein (249 aa).

Its subcellular location is the cytoplasm. The protein localises to the nucleus. It localises to the nucleolus. This is an uncharacterized protein from Schizosaccharomyces pombe (strain 972 / ATCC 24843) (Fission yeast).